The sequence spans 463 residues: tRNA-2-methylthio-N(6)-dimethylallyladenosine synthase (463 aa).

The region spanning G19 to S135 is the MTTase N-terminal domain. C28, C64, C98, C170, C174, and C177 together coordinate [4Fe-4S] cluster. Residues R156 to E393 form the Radical SAM core domain. The 68-residue stretch at Q396 to L463 folds into the TRAM domain.

This sequence belongs to the methylthiotransferase family. MiaB subfamily. In terms of assembly, monomer. Requires [4Fe-4S] cluster as cofactor.

The protein localises to the cytoplasm. It catalyses the reaction N(6)-dimethylallyladenosine(37) in tRNA + (sulfur carrier)-SH + AH2 + 2 S-adenosyl-L-methionine = 2-methylsulfanyl-N(6)-dimethylallyladenosine(37) in tRNA + (sulfur carrier)-H + 5'-deoxyadenosine + L-methionine + A + S-adenosyl-L-homocysteine + 2 H(+). Catalyzes the methylthiolation of N6-(dimethylallyl)adenosine (i(6)A), leading to the formation of 2-methylthio-N6-(dimethylallyl)adenosine (ms(2)i(6)A) at position 37 in tRNAs that read codons beginning with uridine. In Prochlorococcus marinus (strain NATL2A), this protein is tRNA-2-methylthio-N(6)-dimethylallyladenosine synthase.